The primary structure comprises 505 residues: Xylose import ATP-binding protein XylG (505 aa).

ABC transporter domains lie at 6 to 243 (LEMR…VGRE) and 262 to 505 (VKNY…TGGK). 38–45 (GENGAGKS) lines the ATP pocket.

The protein belongs to the ABC transporter superfamily. Xylose importer (TC 3.A.1.2.4) family. The complex is composed of two ATP-binding proteins (XylG), two transmembrane proteins (XylH) and a solute-binding protein (XylF).

Its subcellular location is the cell membrane. The enzyme catalyses D-xylose(out) + ATP + H2O = D-xylose(in) + ADP + phosphate + H(+). Part of the ABC transporter complex XylFGH involved in xylose import. Responsible for energy coupling to the transport system. The polypeptide is Xylose import ATP-binding protein XylG (Thermoanaerobacter pseudethanolicus (strain ATCC 33223 / 39E) (Clostridium thermohydrosulfuricum)).